A 256-amino-acid chain; its full sequence is Imidazole glycerol phosphate synthase subunit HisF (256 aa).

Catalysis depends on residues Asp-12 and Asp-131.

Belongs to the HisA/HisF family. As to quaternary structure, heterodimer of HisH and HisF.

It is found in the cytoplasm. It carries out the reaction 5-[(5-phospho-1-deoxy-D-ribulos-1-ylimino)methylamino]-1-(5-phospho-beta-D-ribosyl)imidazole-4-carboxamide + L-glutamine = D-erythro-1-(imidazol-4-yl)glycerol 3-phosphate + 5-amino-1-(5-phospho-beta-D-ribosyl)imidazole-4-carboxamide + L-glutamate + H(+). It participates in amino-acid biosynthesis; L-histidine biosynthesis; L-histidine from 5-phospho-alpha-D-ribose 1-diphosphate: step 5/9. In terms of biological role, IGPS catalyzes the conversion of PRFAR and glutamine to IGP, AICAR and glutamate. The HisF subunit catalyzes the cyclization activity that produces IGP and AICAR from PRFAR using the ammonia provided by the HisH subunit. The sequence is that of Imidazole glycerol phosphate synthase subunit HisF from Pseudomonas entomophila (strain L48).